The chain runs to 297 residues: MSRNIGVIGLGAMGFGVAQSLLRAGFNVHACDLRPEVLQRFADAGGVPCASPAELGSRCDVVLTLVVNAQQTEAVLFGANGAAAAMQPGKLVIASATVPPGFAEALGRRLAEQGLLMLDAPVSGGAARAASGEMTMMTSGPAEAYSLAEDVLAAIAGKVYRLGAAHGAGSKVKIINQLLAGVHIAAAAEAMALGLREGVDPDALYDVITHSAGNSWMFENRVPHILKGDYTPLSAVDIFVKDLGMVLDTARHSKFPLPLSAAAHQMFMMASTAGHGGEDDSAVIKIFPGIELPGKAE.

NAD(+) is bound by residues 3 to 31 (RNIG…VHAC) and threonine 97. The active site involves lysine 173. Position 241 (lysine 241) interacts with NAD(+).

The protein belongs to the HIBADH-related family. L-threonate dehydrogenase subfamily.

The enzyme catalyses L-threonate + NAD(+) = 2-dehydro-L-erythronate + NADH + H(+). Functionally, catalyzes oxidation of L-threonate to 2-oxo-tetronate. Can use either NAD(+) or NADP(+) as cosubstrate, with a preference for NAD(+). The chain is L-threonate dehydrogenase from Cupriavidus necator (strain ATCC 17699 / DSM 428 / KCTC 22496 / NCIMB 10442 / H16 / Stanier 337) (Ralstonia eutropha).